We begin with the raw amino-acid sequence, 357 residues long: D-amino-acid oxidase (357 aa).

Residues Ala13, Gly14, Ser42, Gly47, Arg289, Gly315, and Gly318 each coordinate FAD. Position 289 (Arg289) interacts with D-proline. Arg289 is a D-serine binding site.

This sequence belongs to the DAMOX/DASOX family. The cofactor is FAD.

The protein localises to the cytoplasm. Its subcellular location is the secreted. The protein resides in the cell wall. The catalysed reaction is a D-alpha-amino acid + O2 + H2O = a 2-oxocarboxylate + H2O2 + NH4(+). It carries out the reaction D-phenylalanine + O2 + H2O = 3-phenylpyruvate + H2O2 + NH4(+). It catalyses the reaction D-lysine + O2 + H2O = 6-amino-2-oxohexanoate + H2O2 + NH4(+). The enzyme catalyses D-methionine + O2 + H2O = 4-methylsulfanyl-2-oxobutanoate + H2O2 + NH4(+). The catalysed reaction is D-arginine + O2 + H2O = 5-guanidino-2-oxopentanoate + H2O2 + NH4(+). It carries out the reaction D-ornithine + O2 + H2O = 5-amino-2-oxopentanoate + H2O2 + NH4(+). It catalyses the reaction D-leucine + O2 + H2O = 4-methyl-2-oxopentanoate + H2O2 + NH4(+). The enzyme catalyses D-histidine + O2 + H2O = 3-(imidazol-5-yl)pyruvate + H2O2 + NH4(+). With respect to regulation, activated by manganese, copper, and iron ions. Inhibited by barium, aluminum, and zinc ions. Its function is as follows. Catalyzes the oxidative deamination of D-amino acids with broad substrate specificity. The protein is D-amino-acid oxidase of Unknown prokaryotic organism.